We begin with the raw amino-acid sequence, 75 residues long: Putative antitoxin VapB17 (75 aa).

In terms of biological role, putative antitoxin component of a possible type II toxin-antitoxin (TA) system. The cognate toxin is VapC17. The chain is Putative antitoxin VapB17 (vapB17) from Mycobacterium tuberculosis (strain CDC 1551 / Oshkosh).